Reading from the N-terminus, the 96-residue chain is Co-chaperonin GroES (96 aa).

The protein belongs to the GroES chaperonin family. In terms of assembly, heptamer of 7 subunits arranged in a ring. Interacts with the chaperonin GroEL.

Its subcellular location is the cytoplasm. Functionally, together with the chaperonin GroEL, plays an essential role in assisting protein folding. The GroEL-GroES system forms a nano-cage that allows encapsulation of the non-native substrate proteins and provides a physical environment optimized to promote and accelerate protein folding. GroES binds to the apical surface of the GroEL ring, thereby capping the opening of the GroEL channel. The sequence is that of Co-chaperonin GroES from Verminephrobacter eiseniae (strain EF01-2).